A 221-amino-acid chain; its full sequence is HP1-HOAP-interacting protein (221 aa).

Positions 69–113 (NAKRHKMARETAASITDVSGSQSSSHQSAPSLHVSGQSSEFGASY) are disordered. A compositionally biased stretch (low complexity) spans 86-103 (VSGSQSSSHQSAPSLHVS).

In terms of assembly, component of the HipHop-HOAP telomere-capping complex, composed of at least HipHop and cav/HOAP, and may include Su(var)205/HP1; HipHop and cav/HOAP, but not Su(var)205, are interdependent for their protein stability. Interacts (via N-terminus) with cav/HOAP and Su(var)205/HP1. The HipHop-HOAP complex recruits the MTV complex, consisting of moi/modigliani, tea and ver/verrocchio, to telomeres to form the terminin telomere-capping complex.

The protein resides in the nucleus. Its subcellular location is the chromosome. The protein localises to the telomere. Its function is as follows. Part of the HipHop-HOAP complex that recruits the MTV complex to form the terminin telomere-capping complex, which binds to chromosome ends in a sequence-independent manner and prevents telomere fusion. The sequence is that of HP1-HOAP-interacting protein from Drosophila melanogaster (Fruit fly).